Consider the following 481-residue polypeptide: GDP-fucose protein O-fucosyltransferase 2 (481 aa).

The N-terminal stretch at 1 to 22 (MKGRAHIWVALLLACLPPRFRN) is a signal peptide. GDP-beta-L-fucose is bound by residues 59-63 (GEGFN), 287-289 (HLR), D365, and 382-383 (RF). Catalysis depends on E60, which acts as the Proton acceptor.

The protein belongs to the glycosyltransferase 68 family.

The protein localises to the endoplasmic reticulum. It catalyses the reaction L-seryl-[protein] + GDP-beta-L-fucose = 3-O-(alpha-L-fucosyl)-L-seryl-[protein] + GDP + H(+). The enzyme catalyses L-threonyl-[protein] + GDP-beta-L-fucose = 3-O-(alpha-L-fucosyl)-L-threonyl-[protein] + GDP + H(+). Its pathway is protein modification; protein glycosylation. Catalyzes the reaction that attaches fucose through an O-glycosidic linkage to a conserved serine or threonine residue in the consensus sequence C1-X-X-S/T-C2 of thrombospondin type I repeats (TSRs) where C1 and C2 are the first and second cysteines of the repeat, respectively. O-fucosylates sporozoite proteins CSP and TRAP. O-fucosylation regulates stability and intracellular trafficking of TRAP but not of CSP. Probably by regulating protein O-fucosylation, may play a role in parasite transmission to the mosquito vector and/or infection of the vertebrate host hepatocytes; however, POFUT2 involvement in transmission/infection is controversial. The chain is GDP-fucose protein O-fucosyltransferase 2 from Plasmodium vivax (strain Salvador I).